Consider the following 105-residue polypeptide: Nitrogen fixation nifHD region glnB-like protein 1 (105 aa).

Belongs to the P(II) protein family.

Functionally, could be involved in the regulation of nitrogen fixation. This is Nitrogen fixation nifHD region glnB-like protein 1 (glnBI) from Methanococcus maripaludis (strain DSM 14266 / JCM 13030 / NBRC 101832 / S2 / LL).